Here is a 343-residue protein sequence, read N- to C-terminus: T-cell immunoglobulin and mucin domain-containing protein 4 (343 aa).

Positions 1-22 (MSKGLLLLWLVTELWWLYLTPA) are cleaved as a signal peptide. Residues 23–128 (ASEDTIIGFL…WFNDVKKNVR (106 aa)) enclose the Ig-like V-type domain. Residues 23-279 (ASEDTIIGFL…KSHQINSRQT (257 aa)) lie on the Extracellular side of the membrane. Disulfide bonds link cysteine 40–cysteine 112, cysteine 53–cysteine 64, and cysteine 59–cysteine 111. Residue asparagine 220 is glycosylated (N-linked (GlcNAc...) asparagine). The segment at 239–258 (TGSNPGILPSTSQLTTQKTT) is disordered. The segment covering 248-258 (STSQLTTQKTT) has biased composition (low complexity). Residues 280 to 300 (ILIIACCVGFVLMVLLFLAFL) traverse the membrane as a helical segment. The Cytoplasmic portion of the chain corresponds to 301–343 (LRGKVTGANCLQRHKRPDNTEDSDSVLNDMSHGRDDEDGIFTL). Residues 313 to 343 (RHKRPDNTEDSDSVLNDMSHGRDDEDGIFTL) are disordered. Phosphoserine is present on residues serine 323, serine 325, and serine 331.

It belongs to the immunoglobulin superfamily. TIM family. In terms of assembly, homodimer. In terms of tissue distribution, predominantly expressed in lymphoid tissues, such as spleen, lymph nodes, and Peyer patches. Also expressed in fetal liver, salivary gland, and spleen stromal cells, predominantly in the marginal zone and to a lesser extent throughout the white pulp. Not expressed in bone marrow-derived cells. Expressed mainly by antigen presenting cells (APCs) in T- and B-cell areas, but not by T- or B-lymphocytes.

It localises to the membrane. Functionally, phosphatidylserine receptor that plays different role in immune response including phagocytosis of apoptotic cells and T-cell regulation. Controls T-cell activation in a bimodal fashion, decreasing the activation of naive T-cells by inducing cell cycle arrest, while increasing proliferation of activated T-cells by activating AKT1 and ERK1/2 phosphorylations and subsequent signaling pathways. Also plays a role in efferocytosis which is the process by which apoptotic cells are removed by phagocytic cells. Mechanistically, promotes the engulfment of apoptotic cells or exogenous particles by securing them to phagocytes through direct binding to phosphatidylserine present on apoptotic cells, while other engulfment receptors such as MERTK efficiently recognize apoptotic cells and mediate their ingestion. Additionally, promotes autophagy process by suppressing NLRP3 inflammasome activity via activation of STK11/PRKAA1 pathway in a phosphatidylserine-dependent mechanism. In Mus musculus (Mouse), this protein is T-cell immunoglobulin and mucin domain-containing protein 4 (Timd4).